A 944-amino-acid chain; its full sequence is Nonsense-mediated mRNA decay factor SMG8 (944 aa).

Disordered stretches follow at residues 560-597 (NTGK…QNTA) and 628-653 (QASS…DTEN). Acidic residues predominate over residues 568 to 583 (QDEDAGEDEAEEEEGQ). Over residues 628-650 (QASSEQLSNSEQNTTSSGTSSAD) the composition is skewed to polar residues.

The protein belongs to the SMG8 family.

Its function is as follows. Involved in nonsense-mediated decay (NMD) of mRNAs containing premature stop codons. Probable component of kinase complex containing nonC and recruited to stalled ribosomes. The chain is Nonsense-mediated mRNA decay factor SMG8 from Drosophila simulans (Fruit fly).